The sequence spans 324 residues: Glyoxylate/hydroxypyruvate reductase B (324 aa).

Residues R237 and E266 contribute to the active site. H285 acts as the Proton donor in catalysis.

The protein belongs to the D-isomer specific 2-hydroxyacid dehydrogenase family. GhrB subfamily. In terms of assembly, homodimer.

It localises to the cytoplasm. It carries out the reaction glycolate + NADP(+) = glyoxylate + NADPH + H(+). It catalyses the reaction (R)-glycerate + NAD(+) = 3-hydroxypyruvate + NADH + H(+). The enzyme catalyses (R)-glycerate + NADP(+) = 3-hydroxypyruvate + NADPH + H(+). In terms of biological role, catalyzes the NADPH-dependent reduction of glyoxylate and hydroxypyruvate into glycolate and glycerate, respectively. The chain is Glyoxylate/hydroxypyruvate reductase B from Salmonella gallinarum (strain 287/91 / NCTC 13346).